The primary structure comprises 122 residues: Large ribosomal subunit protein uL14 (122 aa).

The protein belongs to the universal ribosomal protein uL14 family. Part of the 50S ribosomal subunit. Forms a cluster with proteins L3 and L19. In the 70S ribosome, L14 and L19 interact and together make contacts with the 16S rRNA in bridges B5 and B8.

In terms of biological role, binds to 23S rRNA. Forms part of two intersubunit bridges in the 70S ribosome. The polypeptide is Large ribosomal subunit protein uL14 (Stenotrophomonas maltophilia (strain R551-3)).